Consider the following 350-residue polypeptide: MAFKLASSPHLKVQLQTQSVMRRVILCALPGIAAQCYFFGFGVLIQVMLAIVVALTAEAAVLALRKRAVLSTISDNSALLTAILIGVAIPPIAPWWLVVIGTLFAIVLVKQLYGGLGQNIFNPAMAAYVMLLISFPVQMTSWSIPTAIAQNPMDIGLTLQAIFGSMSAEQLSLYKLGFDGVAMATPLDTVKTDLSLGLTTSESLTKAIFSDGYGVGWFWVNMAYLAGGLIMLKLKVIRWHISFAILGSLFVCSSFGYLLSPDTHVGPLLQLFSGATMIAAFFIATDPVTAATSVKGRLLFGTLIGVMVYVIRTYGGYPDAFAFAVLLANLCAPFIDYYVKPRTYGHRTGN.

A run of 4 helical transmembrane segments spans residues 37 to 57, 68 to 88, 89 to 109, and 120 to 140; these read YFFG…ALTA, AVLS…IGVA, IPPI…IVLV, and IFNP…VQMT. The residue at position 185 (threonine 185) is an FMN phosphoryl threonine. The next 5 helical transmembrane spans lie at 212 to 232, 239 to 259, 265 to 285, 291 to 311, and 315 to 335; these read GYGV…LIML, WHIS…GYLL, VGPL…FIAT, ATSV…VYVI, and GGYP…APFI.

The protein belongs to the NqrB/RnfD family. As to quaternary structure, the complex is composed of six subunits: RnfA, RnfB, RnfC, RnfD, RnfE and RnfG. FMN serves as cofactor.

It localises to the cell inner membrane. Functionally, part of a membrane-bound complex that couples electron transfer with translocation of ions across the membrane. This Shewanella pealeana (strain ATCC 700345 / ANG-SQ1) protein is Ion-translocating oxidoreductase complex subunit D.